The chain runs to 196 residues: Imidazoleglycerol-phosphate dehydratase (196 aa).

This sequence belongs to the imidazoleglycerol-phosphate dehydratase family.

It localises to the cytoplasm. It catalyses the reaction D-erythro-1-(imidazol-4-yl)glycerol 3-phosphate = 3-(imidazol-4-yl)-2-oxopropyl phosphate + H2O. It participates in amino-acid biosynthesis; L-histidine biosynthesis; L-histidine from 5-phospho-alpha-D-ribose 1-diphosphate: step 6/9. This chain is Imidazoleglycerol-phosphate dehydratase, found in Ralstonia nicotianae (strain ATCC BAA-1114 / GMI1000) (Ralstonia solanacearum).